We begin with the raw amino-acid sequence, 191 residues long: Protein GrpE (191 aa).

Basic and acidic residues predominate over residues Met1–Glu21. Residues Met1–Val39 form a disordered region. The span at Asp22–Asp38 shows a compositional bias: acidic residues.

Belongs to the GrpE family. Homodimer.

It localises to the cytoplasm. Functionally, participates actively in the response to hyperosmotic and heat shock by preventing the aggregation of stress-denatured proteins, in association with DnaK and GrpE. It is the nucleotide exchange factor for DnaK and may function as a thermosensor. Unfolded proteins bind initially to DnaJ; upon interaction with the DnaJ-bound protein, DnaK hydrolyzes its bound ATP, resulting in the formation of a stable complex. GrpE releases ADP from DnaK; ATP binding to DnaK triggers the release of the substrate protein, thus completing the reaction cycle. Several rounds of ATP-dependent interactions between DnaJ, DnaK and GrpE are required for fully efficient folding. This chain is Protein GrpE, found in Tetragenococcus halophilus (Pediococcus halophilus).